The primary structure comprises 124 residues: Iron-sulfur cluster insertion protein ErpA (124 aa).

Residues Cys-52, Cys-116, and Cys-118 each contribute to the iron-sulfur cluster site.

It belongs to the HesB/IscA family. In terms of assembly, homodimer. It depends on iron-sulfur cluster as a cofactor.

Required for insertion of 4Fe-4S clusters for at least IspG. The sequence is that of Iron-sulfur cluster insertion protein ErpA from Vibrio atlanticus (strain LGP32) (Vibrio splendidus (strain Mel32)).